Here is a 105-residue protein sequence, read N- to C-terminus: BLOC-1-related complex subunit 7 (105 aa).

It belongs to the BORCS7 family. Component of the BLOC-one-related complex (BORC) which is composed of BLOC1S1, BLOC1S2, BORCS5, BORCS6, BORCS7, BORCS8, KXD1 and SNAPIN.

It is found in the lysosome membrane. Functionally, as part of the BORC complex may play a role in lysosomes movement and localization at the cell periphery. Associated with the cytosolic face of lysosomes, the BORC complex may recruit ARL8B and couple lysosomes to microtubule plus-end-directed kinesin motor. The polypeptide is BLOC-1-related complex subunit 7 (Bos taurus (Bovine)).